Consider the following 368-residue polypeptide: Phosphate acyltransferase (368 aa).

Positions 334 to 368 are disordered; sequence AAPLGESGRDADGAGQASPSAGQPAEPSAALSSKT.

The protein belongs to the PlsX family. In terms of assembly, homodimer. Probably interacts with PlsY.

Its subcellular location is the cytoplasm. It carries out the reaction a fatty acyl-[ACP] + phosphate = an acyl phosphate + holo-[ACP]. It participates in lipid metabolism; phospholipid metabolism. Its function is as follows. Catalyzes the reversible formation of acyl-phosphate (acyl-PO(4)) from acyl-[acyl-carrier-protein] (acyl-ACP). This enzyme utilizes acyl-ACP as fatty acyl donor, but not acyl-CoA. This Burkholderia thailandensis (strain ATCC 700388 / DSM 13276 / CCUG 48851 / CIP 106301 / E264) protein is Phosphate acyltransferase.